We begin with the raw amino-acid sequence, 386 residues long: Patatin-16 (386 aa).

The first 23 residues, 1 to 23, serve as a signal peptide directing secretion; the sequence is MATTKSFLILIVMILATTSSTFA. Positions 32–229 constitute a PNPLA domain; sequence LSIDGGGIKG…TVADPALLSV (198 aa). The GXGXXG motif lies at 36 to 41; that stretch reads GGGIKG. Residues 75–79 carry the GXSXG motif; that stretch reads GTSTG. Serine 77 (nucleophile) is an active-site residue. An N-linked (GlcNAc...) asparagine glycan is attached at asparagine 115. The active-site Proton acceptor is the aspartate 215. Residues 215–217 carry the DGA/G motif; it reads DGA. Positions 360 to 384 form a coiled coil; that stretch reads ETYEEALKRFAKLLSDRKKLRANKA.

Belongs to the patatin family.

The protein resides in the vacuole. Probable lipolytic acyl hydrolase (LAH), an activity which is thought to be involved in the response of tubers to pathogens. This is Patatin-16 from Solanum tuberosum (Potato).